A 567-amino-acid polypeptide reads, in one-letter code: Urease subunit alpha (567 aa).

Residues 129–567 form the Urease domain; that stretch reads GGVDSHIHFI…LPLAQRYFLF (439 aa). Residues His-134, His-136, and Lys-217 each coordinate Ni(2+). The residue at position 217 (Lys-217) is an N6-carboxylysine. Position 219 (His-219) interacts with substrate. His-246 and His-272 together coordinate Ni(2+). The Proton donor role is filled by His-320. Position 360 (Asp-360) interacts with Ni(2+).

Belongs to the metallo-dependent hydrolases superfamily. Urease alpha subunit family. Heterotrimer of UreA (gamma), UreB (beta) and UreC (alpha) subunits. Three heterotrimers associate to form the active enzyme. The cofactor is Ni cation. Post-translationally, carboxylation allows a single lysine to coordinate two nickel ions.

Its subcellular location is the cytoplasm. The catalysed reaction is urea + 2 H2O + H(+) = hydrogencarbonate + 2 NH4(+). The protein operates within nitrogen metabolism; urea degradation; CO(2) and NH(3) from urea (urease route): step 1/1. The polypeptide is Urease subunit alpha (Pseudomonas putida (strain ATCC 700007 / DSM 6899 / JCM 31910 / BCRC 17059 / LMG 24140 / F1)).